The chain runs to 475 residues: uncharacterized protein (475 aa).

A helical transmembrane segment spans residues 19–39; sequence LVSAILILSILIWLIITIFFA.

The protein resides in the membrane. This is an uncharacterized protein from Mycoplasma pneumoniae (strain ATCC 29342 / M129 / Subtype 1) (Mycoplasmoides pneumoniae).